The chain runs to 313 residues: 4-hydroxy-3-methylbut-2-enyl diphosphate reductase (313 aa).

Residue Cys-12 coordinates [4Fe-4S] cluster. Residues His-41 and His-74 each contribute to the (2E)-4-hydroxy-3-methylbut-2-enyl diphosphate site. 2 residues coordinate dimethylallyl diphosphate: His-41 and His-74. The isopentenyl diphosphate site is built by His-41 and His-74. Cys-96 is a [4Fe-4S] cluster binding site. His-124 contacts (2E)-4-hydroxy-3-methylbut-2-enyl diphosphate. His-124 serves as a coordination point for dimethylallyl diphosphate. An isopentenyl diphosphate-binding site is contributed by His-124. The active-site Proton donor is the Glu-126. Thr-167 contacts (2E)-4-hydroxy-3-methylbut-2-enyl diphosphate. Cys-197 lines the [4Fe-4S] cluster pocket. The (2E)-4-hydroxy-3-methylbut-2-enyl diphosphate site is built by Ser-225, Ser-226, Asn-227, and Ser-269. Positions 225, 226, 227, and 269 each coordinate dimethylallyl diphosphate. Residues Ser-225, Ser-226, Asn-227, and Ser-269 each coordinate isopentenyl diphosphate.

This sequence belongs to the IspH family. Homodimer. The cofactor is [4Fe-4S] cluster.

It carries out the reaction isopentenyl diphosphate + 2 oxidized [2Fe-2S]-[ferredoxin] + H2O = (2E)-4-hydroxy-3-methylbut-2-enyl diphosphate + 2 reduced [2Fe-2S]-[ferredoxin] + 2 H(+). The catalysed reaction is dimethylallyl diphosphate + 2 oxidized [2Fe-2S]-[ferredoxin] + H2O = (2E)-4-hydroxy-3-methylbut-2-enyl diphosphate + 2 reduced [2Fe-2S]-[ferredoxin] + 2 H(+). It participates in isoprenoid biosynthesis; dimethylallyl diphosphate biosynthesis; dimethylallyl diphosphate from (2E)-4-hydroxy-3-methylbutenyl diphosphate: step 1/1. It functions in the pathway isoprenoid biosynthesis; isopentenyl diphosphate biosynthesis via DXP pathway; isopentenyl diphosphate from 1-deoxy-D-xylulose 5-phosphate: step 6/6. Its function is as follows. Catalyzes the conversion of 1-hydroxy-2-methyl-2-(E)-butenyl 4-diphosphate (HMBPP) into a mixture of isopentenyl diphosphate (IPP) and dimethylallyl diphosphate (DMAPP). Acts in the terminal step of the DOXP/MEP pathway for isoprenoid precursor biosynthesis. The protein is 4-hydroxy-3-methylbut-2-enyl diphosphate reductase of Buchnera aphidicola subsp. Schizaphis graminum (strain Sg).